We begin with the raw amino-acid sequence, 191 residues long: Ciliary microtubule-associated protein 3 (191 aa).

As to quaternary structure, interacts with proteins involved in ciliary transport, including ARL13B, CETN1, KIF3A, RAB6A, RAB8A, TUBB1 and TUBG1. Interacts with AURKA.

The protein localises to the cytoplasmic vesicle. It is found in the golgi apparatus. It localises to the trans-Golgi network. Its subcellular location is the cytoplasm. Functionally, during primary cilia disassembly, involved in cilia disassembly. Required specifically to control cilia retraction as well as the liberation and duplication of the basal body/centrosome. May act by stimulating AURKA activity at the basal body in a cell cycle-dependent manner. The sequence is that of Ciliary microtubule-associated protein 3 from Homo sapiens (Human).